The chain runs to 89 residues: Small ribosomal subunit protein uS15 (89 aa).

The protein belongs to the universal ribosomal protein uS15 family. Part of the 30S ribosomal subunit. Forms a bridge to the 50S subunit in the 70S ribosome, contacting the 23S rRNA.

One of the primary rRNA binding proteins, it binds directly to 16S rRNA where it helps nucleate assembly of the platform of the 30S subunit by binding and bridging several RNA helices of the 16S rRNA. In terms of biological role, forms an intersubunit bridge (bridge B4) with the 23S rRNA of the 50S subunit in the ribosome. The protein is Small ribosomal subunit protein uS15 of Acaryochloris marina (strain MBIC 11017).